The following is a 157-amino-acid chain: Small ribosomal subunit protein uS7 (157 aa).

Belongs to the universal ribosomal protein uS7 family. In terms of assembly, part of the 30S ribosomal subunit. Contacts proteins S9 and S11.

In terms of biological role, one of the primary rRNA binding proteins, it binds directly to 16S rRNA where it nucleates assembly of the head domain of the 30S subunit. Is located at the subunit interface close to the decoding center, probably blocks exit of the E-site tRNA. In Blochmanniella floridana, this protein is Small ribosomal subunit protein uS7.